The primary structure comprises 221 residues: UPF0319 protein CGSHiEE_03630 (221 aa).

A signal peptide spans Met-1–Ala-21.

This sequence belongs to the UPF0319 family.

The sequence is that of UPF0319 protein CGSHiEE_03630 from Haemophilus influenzae (strain PittEE).